We begin with the raw amino-acid sequence, 323 residues long: tRNA U34 carboxymethyltransferase (323 aa).

Carboxy-S-adenosyl-L-methionine contacts are provided by residues Lys90, Trp104, Lys109, Gly129, 182-183 (IE), Met197, Tyr201, and Arg316.

The protein belongs to the class I-like SAM-binding methyltransferase superfamily. CmoB family. As to quaternary structure, homotetramer.

The catalysed reaction is carboxy-S-adenosyl-L-methionine + 5-hydroxyuridine(34) in tRNA = 5-carboxymethoxyuridine(34) in tRNA + S-adenosyl-L-homocysteine + H(+). In terms of biological role, catalyzes carboxymethyl transfer from carboxy-S-adenosyl-L-methionine (Cx-SAM) to 5-hydroxyuridine (ho5U) to form 5-carboxymethoxyuridine (cmo5U) at position 34 in tRNAs. This is tRNA U34 carboxymethyltransferase from Idiomarina loihiensis (strain ATCC BAA-735 / DSM 15497 / L2-TR).